The chain runs to 3623 residues: MSSQFLWGFVTLLMIAELDGKTGKPEQRGQKRIADLHQPRMTTEEGNLVFLTSSTQNIEFRTGSLGKIKLNDEDLGECLHQIQRNKDDIIDLRKNTTGLPQNILSQVHQLNSKLVDLERDFQNLQQNVERKVCSSNPCLNGGTCVNLHDSFVCICPSQWKGLFCSEDVNECVVYSGTPFGCQSGSTCVNTVGSFRCDCTPDTYGPQCASKYNDCEQGSKQLCKHGICEDLQRVHHGQPNFHCICDAGWTTPPNGISCTEDKDECSLQPSPCSEHAQCFNTQGSFYCGACPKGWQGNGYECQDINECEINNGGCSQAPLVPCLNTPGSFSCGNCPAGFSGDGRVCTPVDICSIHNGGCHPEATCSSSPVLGSFLPVCTCPPGYTGNGYGSNGCVRLSNICSRHPCVNGQCIETVSSYFCKCDSGWSGQNCTENINDCSSNPCLNGGTCIDGINGFTCDCTSSWTGYYCQTPQAACGGILSGTQGTFAYHSPNDTYIHNVNCFWIVRTDEEKVLHVTFTFFDLESASNCPREYLQIHDGDSSADFPLGRYCGSRPPQGIHSSANALYFHLYSEYIRSGRGFTARWEAKLPECGGILTDNYGSITSPGYPGNYPPGRDCVWQVLVNPNSLITFTFGTLSLESHNDCSKDYLEIRDGPFHQDPVLGKFCTSLSTPPLKTTGPAARIHFHSDSETSDKGFHITYLTTQSDLDCGGNYTDTDGELLLPPLSGPFSHSRQCVYLITQAQGEQIVINFTHVELESQMGCSHTYIEVGDHDSLLRKICGNETLFPIRSVSNKVWIRLRIDALVQKASFRADYQVACGGMLRGEGFFRSPFYPNAYPGRRTCRWTISQPQRQVVLLNFTDFQIGSSASCDTDYIEIGPSSVLGSPGNEKFCSSNIPSFITSVYNILYVTFVKSSSMENRGFTAKFSSDKLECGEVLTASTGIIESPGHPNVYPRGVNCTWHVVVQRGQLIRLEFSSFYLEFHYNCTNDYLEIYDTAAQTFLGRYCGKSIPPSLTSNSNSIKLIFVSDSALAHEGFSINYEAIDASSVCLYDYTDNFGMLSSPNFPNNYPSNWECIYRITVGLNQQIALHFTDFTLEDYFGSQCVDFVEIRDGGYETSPLVGIYCGSVLPPTIISHSNKLWLKFKSDAALTAKGFSAYWDGSSTGCGGNLTTPTGVLTSPNYPMPYYHSSECYWRLEASHGSPFELEFQDFHLEHHPSCSLDYLAVFDGPTTNSRLIDKLCGDTTPAPIRSNKDVVLLKLRTDAGQQGRGFEINFRQRCDNVVIVNKTSGILESINYPNPYDKNQRCNWTIQATTGNTVNYTFLGFDVESYMNCSTDYVELYDGPQWMGRYCGNNMPPPGATTGSQLHVLFHTDGINSGEKGFKMQWFTHGCGGEMSGTAGSFSSPGYPNSYPHNKECIWNIRVAPGSSIQLTIHDFDVEYHTSCNYDSLEIYAGLDFNSPRIAQLCSQSPSANPMQVSSTGNELAIRFKTDSTLNGRGFNASWRAVPGGCGGIIQLSRGEIHSPNYPNNYRANTECSWIIQVERHHRVLLNITDFDLEAPDSCLRLMDGSSSTNARVASVCGRQQPPNSIIASGNSLFVRFRSGSSSQNRGFRAEFREECGGRIMTDSSDTIFSPLYPHNYLHNQNCSWIIEAQPPFNHITLSFTHFQLQNSTDCTRDFVEILDGNDYDAPVQGRYCGFSLPHPIISFGNALTVRFVTDSTRSFEGFRAIYSASTSSCGGSFYTLDGIFNSPDYPADYHPNAECVWNIASSPGNRLQLSFLSFNLENSLNCNKDFVEIREGNATGHLIGRYCGNSLPGNYSSAEGHSLWVRFVSDGSGTGMGFQARFKNIFGNNNIVGTHGKIASPFWPGKYPYNSNYKWVVNVDAYHIIHGRILEMDIEPTTNCFYDSLKIYDGFDTHSRLIGTYCGTQTESFSSSRNSLTFQFSSDSSVSGRGFLLEWFAVDVSDSTPPTIAPGACGGFMVTGDTPVHIFSPGWPREYANGADCIWIIYAPDSTVELNILSLDIEPQQSCNYDKLIVKDGDSDLSPELAVLCGVSPPGPIRSTGEYMYIRFTSDTSVAGTGFNASFHKSCGGYLHADRGVITSPKYPDTYLPNLNCSWHVLVQTGLTIAVHFEQPFQIQNRDSFCSQGDYLVLRNGPDNHSPPLGPSGRNGRFCGMYAPSTLFTSGNEMFVQFISDSSNGGQGFKIRYEAKSLACGGTVYIHDADSDGYLTSPNYPANYPQHAECIWILEAPPGRSIQLQFEDQFNIEDTPNCSVSYLELRDGANSNARLVSKLCGHTLPHSWVSSRERIYLKFHTDGGSSYMGFKAKYSIASCGGTVSGDSGVIESIGYPTLPYANNVFCQWFIRGLPGHYLTLSFEDFNLQSSPGCTKDFVEIWENHTSGRVLGRYCGNSTPSSVDTSSNVASVKFVTDGSVTASGFRLQFKSSRQVCGGDLHGPTGTFTSPNYPNPNPHARICEWTITVQEGRRIVLTFTNLRLSTQPSCNSEHLIVFNGIRSNSPLLQKLCSRVNVTNEFKSSGNTMKVVFFTDGSRPYGGFTASYTSTEDAVCGGFLPSVSGGNFSSPGYNGIRDYARNLDCEWTLSNPNRENSSISIYFLELSIESHQDCTFDVLEFRVGDADGPLIEKFCSLSAPTAPLVIPYPQVWIHFVSNERVEYTGFYIEYSFTDCGGIRTGDNGVISSPNYPNLYSAWTHCSWLLKAPEGHTITLTFSDFLLEAHPTCTSDSVTVRNGDSPGSPVIGRYCGQSVPRPIQSGSNQLIVTFNTNNQGQTRGFYATWTTNALGCGGTFHSANGTIKSPHWPQTFPENSRCSWTVITHESKHWEISFDSNFRIPSSDSQCQNSFVKVWEGRLMINKTLLATSCGDVAPSPIVTSGNIFTAVFQSEEMAAQGFSASFISRCGRTFNTSPGDIISPNFPKQYDNNMNCTYLIDADPQSLVILTFVSFHLEDRSAITGTCDHDGLHIIKGRNLSSTPLVTICGSETLRPLTVDGPVLLNFYSDAYTTDFGFKISYRAITCGGIYNESSGILRSPSYSYSNYPNNLYCVYSLHVRSSRVIIIRFNDFDVAPSNLCAHDFLEVFDGPSIGNRSLGKFCGSTRPQTVKSTNSSLTLLFKTDSSQTARGWKIFFRETIGPQQGCGGYLTEDNQSFVSPDSDSNGRYDKGLSCIWYIVAPENKLVKLTFNVFTLEGPSSAGSCVYDYVQIADGASINSYLGGKFCGSRMPAPFISSGNFLTFQFVSDVTVEMRGFNATYTFVDMPCGGTYNATSTPQNASSPHLSNIGRPYSTCTWVIAAPPQQQVQITVWDLQLPSQDCSQSYLELQDSVQTGGNRVTQFCGANYTTLPVFYSSMSTAVVVFKSGVLNRNSQVQFSYQIADCNREYNQTFGNLKSPGWPQNYDNNLDCTIILRAPQNHSISLFFYWFQLEDSRQCMNDFLEVRNGGSSTSPLLDKYCSNLLPNPVFSQSNELYLHFHSDHSVTNNGYEIIWTSSAAGCGGTLLGDEGIFTNPGFPDSYPNNTHCEWTIVAPSGRPVSVGFPFLSIDSSGGCDQNYLIVFNGPDANSPPFGPLCGINTGIAPFYASSNRVFIRFHAEYTTRLSGFEIMWSS.

The signal sequence occupies residues 1–20 (MSSQFLWGFVTLLMIAELDG). Residues 21–32 (KTGKPEQRGQKR) constitute a propeptide, removed in mature form. The interval 39–46 (PRMTTEEG) is interaction with AMN. Asn-95 is a glycosylation site (N-linked (GlcNAc...) asparagine). In terms of domain architecture, EGF-like 1 spans 129–165 (ERKVCSSNPCLNGGTCVNLHDSFVCICPSQWKGLFCS). 9 disulfide bridges follow: Cys-133–Cys-144, Cys-138–Cys-153, Cys-155–Cys-164, Cys-171–Cys-187, Cys-181–Cys-196, Cys-198–Cys-207, Cys-264–Cys-277, Cys-271–Cys-286, and Cys-289–Cys-300. Residues 167 to 208 (DVNECVVYSGTPFGCQSGSTCVNTVGSFRCDCTPDTYGPQCA) form the EGF-like 2; calcium-binding domain. An EGF-like 3; calcium-binding domain is found at 260 to 301 (DKDECSLQPSPCSEHAQCFNTQGSFYCGACPKGWQGNGYECQ). One can recognise an EGF-like 4; calcium-binding domain in the interval 302–345 (DINECEINNGGCSQAPLVPCLNTPGSFSCGNCPAGFSGDGRVCT). 2 EGF-like domains span residues 346–385 (PVDICSIHNGGCHPEATCSSSPVLGSFLPVCTCPPGYTGN) and 395–430 (LSNICSRHPCVNGQCIETVSSYFCKCDSGWSGQNCT). 13 disulfides stabilise this stretch: Cys-350-Cys-363, Cys-357-Cys-376, Cys-399-Cys-409, Cys-404-Cys-418, Cys-420-Cys-429, Cys-436-Cys-447, Cys-441-Cys-456, Cys-458-Cys-467, Cys-474-Cys-500, Cys-527-Cys-549, Cys-590-Cys-616, Cys-643-Cys-665, and Cys-708-Cys-734. A glycan (N-linked (GlcNAc...) asparagine) is linked at Asn-428. One can recognise an EGF-like 7; calcium-binding domain in the interval 432–468 (NINDCSSNPCLNGGTCIDGINGFTCDCTSSWTGYYCQ). 27 consecutive CUB domains span residues 474 to 586 (CGGI…WEAK), 590 to 702 (CGGI…YLTT), 708 to 816 (CGGN…YQVA), 817 to 928 (CGGM…FSSD), 932 to 1042 (CGEV…YEAI), 1048 to 1161 (CLYD…WDGS), 1165 to 1277 (CGGN…FRQR), 1278 to 1389 (CDNV…WFTH), 1391 to 1506 (CGGE…WRAV), 1510 to 1619 (CGGI…FREE), 1620 to 1734 (CGGR…YSAS), 1738 to 1850 (CGGS…FKNI), 1852 to 1963 (GNNN…WFAV), 1978 to 2091 (CGGF…FHKS), 2092 to 2213 (CGGY…YEAK), 2217 to 2334 (CGGT…YSIA), 2336 to 2448 (CGGT…FKSS), 2452 to 2565 (CGGD…YTST), 2570 to 2687 (CGGF…YSFT), 2689 to 2801 (CGGI…WTTN), 2805 to 2919 (CGGT…FISR), 2920 to 3035 (CGRT…YRAI), 3037 to 3150 (CGGI…FRET), 3157 to 3274 (CGGY…YTFV), 3278 to 3393 (CGGT…YQIA), 3395 to 3507 (CNRE…WTSS), and 3511 to 3623 (CGGT…MWSS). Residue Asn-491 is glycosylated (N-linked (GlcNAc...) asparagine). 2 N-linked (GlcNAc...) asparagine glycosylation sites follow: Asn-711 and Asn-749. The cysteines at positions 761 and 779 are disulfide-linked. The N-linked (GlcNAc...) asparagine glycan is linked to Asn-781. A disulfide bridge connects residues Cys-817 and Cys-842. An N-linked (GlcNAc...) asparagine glycan is attached at Asn-857. 2 cysteine pairs are disulfide-bonded: Cys-869-Cys-891 and Cys-932-Cys-958. Residue Asn-957 is glycosylated (N-linked (GlcNAc...) asparagine). Glu-980 provides a ligand contact to Ca(2+). The N-linked (GlcNAc...) asparagine glycan is linked to Asn-984. Cys-985 and Cys-1005 are joined by a disulfide. Residues Asp-988, Asp-1027, and Leu-1030 each coordinate Ca(2+). Residues Cys-1048 and Cys-1074 are joined by a disulfide bond. Ca(2+) contacts are provided by Glu-1096, Asp-1105, and Asp-1146. Cys-1165 and Cys-1191 are oxidised to a cystine. N-linked (GlcNAc...) asparagine glycosylation is present at Asn-1168. The Ca(2+) site is built by Glu-1213, Asp-1221, Asp-1262, Gly-1264, and Gln-1265. A disulfide bridge connects residues Cys-1218 and Cys-1240. A disulfide bridge connects residues Cys-1278 and Cys-1306. Residues Asn-1285, Asn-1307, and Asn-1319 are each glycosylated (N-linked (GlcNAc...) asparagine). Residue Glu-1328 coordinates Ca(2+). An N-linked (GlcNAc...) asparagine glycan is attached at Asn-1332. Cysteines 1333 and 1351 form a disulfide. 3 residues coordinate Ca(2+): Asp-1336, Asp-1373, and Ile-1375. 2 disulfides stabilise this stretch: Cys-1391/Cys-1417 and Cys-1444/Cys-1466. Residue Asn-1500 is glycosylated (N-linked (GlcNAc...) asparagine). Cys-1510 and Cys-1536 are joined by a disulfide. Residues Asn-1551, Asn-1646, and Asn-1671 are each glycosylated (N-linked (GlcNAc...) asparagine). The cysteines at positions 1620 and 1647 are disulfide-linked. 3 cysteine pairs are disulfide-bonded: Cys-1675/Cys-1697, Cys-1738/Cys-1764, and Cys-1791/Cys-1812. N-linked (GlcNAc...) asparagine glycosylation is found at Asn-1802 and Asn-1819. 3 disulfides stabilise this stretch: Cys-1905–Cys-1927, Cys-1978–Cys-2006, and Cys-2032–Cys-2054. N-linked (GlcNAc...) asparagine glycans are attached at residues Asn-2085 and Asn-2117. 2 disulfides stabilise this stretch: Cys-2092-Cys-2118 and Cys-2217-Cys-2247. A glycan (N-linked (GlcNAc...) asparagine) is linked at Asn-2274. 5 disulfide bridges follow: Cys-2275/Cys-2297, Cys-2336/Cys-2363, Cys-2390/Cys-2411, Cys-2452/Cys-2478, and Cys-2505/Cys-2527. The N-linked (GlcNAc...) asparagine glycan is linked to Asn-2400. 3 N-linked (GlcNAc...) asparagine glycosylation sites follow: Asn-2531, Asn-2581, and Asn-2610. A disulfide bond links Cys-2570 and Cys-2599. Cystine bridges form between Cys-2628/Cys-2649, Cys-2689/Cys-2715, Cys-2742/Cys-2764, Cys-2805/Cys-2831, Cys-2860/Cys-2883, Cys-2920/Cys-2946, and Cys-2977/Cys-2999. 4 N-linked (GlcNAc...) asparagine glycosylation sites follow: Asn-2813, Asn-2875, Asn-2945, and Asn-2989. Thr-3008 carries the post-translational modification Phosphothreonine. 2 cysteine pairs are disulfide-bonded: Cys-3037-Cys-3064 and Cys-3091-Cys-3113. Residues Asn-3042, Asn-3106, Asn-3125, and Asn-3165 are each glycosylated (N-linked (GlcNAc...) asparagine). 2 disulfides stabilise this stretch: Cys-3157–Cys-3185 and Cys-3215–Cys-3237. N-linked (GlcNAc...) asparagine glycans are attached at residues Asn-3268, Asn-3283, and Asn-3290. Intrachain disulfides connect Cys-3278–Cys-3306 and Cys-3332–Cys-3354. N-linked (GlcNAc...) asparagine glycans are attached at residues Asn-3357, Asn-3400, and Asn-3430. Cys-3395 and Cys-3421 form a disulfide bridge. Intrachain disulfides connect Cys-3448–Cys-3470, Cys-3511–Cys-3537, and Cys-3564–Cys-3586. Asn-3533 is a glycosylation site (N-linked (GlcNAc...) asparagine).

In terms of assembly, interacts with AMN. Component of the cubam complex composed of one CUBN trimer and one AMN chain. The cubam complex can dimerize. Interacts with LRP2 in a dual-receptor complex in a calcium-dependent manner. Found in a complex with PID1/PCLI1, LRP1 and CUBNI. Interacts with LRP1 and PID1/PCLI1. Post-translationally, the precursor is cleaved by a trans-Golgi proteinase furin, removing a propeptide. In terms of processing, N-glycosylated. As to expression, expressed to intestinal, renal and yalk sac apical membranes. In kidney, expressed in the proximal tubule.

The protein localises to the cell membrane. It is found in the endosome membrane. Its subcellular location is the lysosome membrane. Endocytic receptor which plays a role in lipoprotein, vitamin and iron metabolism by facilitating their uptake. Acts together with LRP2 to mediate endocytosis of high-density lipoproteins, GC, hemoglobin, ALB, TF and SCGB1A1. Acts together with AMN to mediate endocytosis of the CBLIF-cobalamin complex. Binds to ALB, MB, Kappa and lambda-light chains, TF, hemoglobin, GC, SCGB1A1, APOA1, high density lipoprotein, and the CBLIF-cobalamin complex. Ligand binding requires calcium. Serves as important transporter in several absorptive epithelia, including intestine, renal proximal tubules and embryonic yolk sac. May play an important role in the development of the peri-implantation embryo through internalization of APOA1 and cholesterol. Binds to LGALS3 at the maternal-fetal interface. The chain is Cubilin (Cubn) from Rattus norvegicus (Rat).